Here is a 411-residue protein sequence, read N- to C-terminus: G2/mitotic-specific cyclin cig2 (411 aa).

A Destruction box motif is present at residues 51–60; the sequence is RTVLSDVSNV. The tract at residues 57 to 89 is disordered; that stretch reads VSNVGKNNADEKDTKKAKRSFDESNLSTNEEAD. A compositionally biased stretch (basic and acidic residues) spans 64-78; the sequence is NADEKDTKKAKRSFD. The 127-residue stretch at 139 to 265 folds into the Cyclin N-terminal domain; the sequence is EIFEYIRKLD…MLNVLNFDLS (127 aa). Positions 181–273 are interaction with pop1; the sequence is SNFCLMPETL…LSYPSPLNFL (93 aa).

Belongs to the cyclin family. Cyclin AB subfamily. Associates with cdc2, res2 and rum1. Interacts with pop1 only when phosphorylated. Phosphorylated.

The protein localises to the nucleus. Its subcellular location is the cytoplasm. It localises to the cytoskeleton. The protein resides in the microtubule organizing center. It is found in the spindle pole body. In terms of biological role, essential for the control of the cell cycle at the G2/M and G1/S (mitosis) transition. Interacts with the cdc2 protein kinase to form MPF. Interaction with res2 promotes the phosphorylation of res1 and inhibits MBF-dependent gene transcription. Forms an autoregulating feedback-inhibition loop with MBF which is important for normal regulation of the cell cycle. G2/M cyclins accumulate steadily during G2 and are abruptly destroyed at mitosis. Negatively regulates conjugation via interacting with cell cycle 'start' genes. Degraded by skp1, pop1 and pop2 in the G2 and M phases of the cell cycle. This chain is G2/mitotic-specific cyclin cig2 (cig2), found in Schizosaccharomyces pombe (strain 972 / ATCC 24843) (Fission yeast).